A 722-amino-acid polypeptide reads, in one-letter code: Ribosomal RNA large subunit methyltransferase K/L (722 aa).

The THUMP domain occupies 43–154 (IGLRACLWSR…GNEGRVGIDL (112 aa)).

It belongs to the methyltransferase superfamily. RlmKL family.

Its subcellular location is the cytoplasm. The catalysed reaction is guanosine(2445) in 23S rRNA + S-adenosyl-L-methionine = N(2)-methylguanosine(2445) in 23S rRNA + S-adenosyl-L-homocysteine + H(+). It catalyses the reaction guanosine(2069) in 23S rRNA + S-adenosyl-L-methionine = N(2)-methylguanosine(2069) in 23S rRNA + S-adenosyl-L-homocysteine + H(+). Functionally, specifically methylates the guanine in position 2445 (m2G2445) and the guanine in position 2069 (m7G2069) of 23S rRNA. This chain is Ribosomal RNA large subunit methyltransferase K/L, found in Magnetococcus marinus (strain ATCC BAA-1437 / JCM 17883 / MC-1).